Here is a 184-residue protein sequence, read N- to C-terminus: TATA-box-binding protein (184 aa).

A run of 2 repeats spans residues 9-85 (IENI…IDKL) and 100-178 (VQNI…KKDL).

Belongs to the TBP family.

Its function is as follows. General factor that plays a role in the activation of archaeal genes transcribed by RNA polymerase. Binds specifically to the TATA box promoter element which lies close to the position of transcription initiation. The chain is TATA-box-binding protein from Picrophilus torridus (strain ATCC 700027 / DSM 9790 / JCM 10055 / NBRC 100828 / KAW 2/3).